The primary structure comprises 1104 residues: A disintegrin and metalloproteinase with thrombospondin motifs 10 (1104 aa).

The signal sequence occupies residues 1–25 (MASACQILRWALALGLGLTFKVTHA). The propeptide occupies 26-233 (FRSQDELLSS…SERGQLGLKR (208 aa)). 2 N-linked (GlcNAc...) asparagine glycosylation sites follow: asparagine 90 and asparagine 222. One can recognise a Peptidase M12B domain in the interval 239–457 (RYVETLVVAD…GLGLCLNNRP (219 aa)). 11 disulfide bridges follow: cysteine 315-cysteine 376, cysteine 351-cysteine 358, cysteine 370-cysteine 452, cysteine 409-cysteine 436, cysteine 479-cysteine 501, cysteine 490-cysteine 508, cysteine 496-cysteine 531, cysteine 521-cysteine 536, cysteine 559-cysteine 596, cysteine 563-cysteine 601, and cysteine 574-cysteine 586. Histidine 392 is a binding site for Zn(2+). Residue glutamate 393 is part of the active site. Residues histidine 396 and histidine 402 each contribute to the Zn(2+) site. The Disintegrin domain occupies 460–546 (QDFVYPTVAP…VPFGSRPEGV (87 aa)). The region spanning 547-602 (DGAWGPWTPWGDCSRSCGGGVSSSSRHCDSPRPTIGGKYCLGERRRHRSCNTNDCP) is the TSP type-1 1 domain. Residues 706–818 (ETIEGVFSPA…PALHYRFNAP (113 aa)) form a spacer region. Residues asparagine 740 and asparagine 795 are each glycosylated (N-linked (GlcNAc...) asparagine). TSP type-1 domains lie at 825-885 (PPYS…EPCP), 888-943 (WVVG…QGPM), 944-1003 (CPPE…RRCP), and 1004-1058 (PARW…AKCD). Cystine bridges form between cysteine 837-cysteine 879, cysteine 841-cysteine 884, and cysteine 852-cysteine 866. A glycan (N-linked (GlcNAc...) asparagine) is linked at asparagine 892. A PLAC domain is found at 1066–1104 (GPEECKDVNKVAYCPLVLKFQFCSRAYFRQMCCKTCQGR).

Interacts with FBN1; this interaction promotes microfibrils assembly. Zn(2+) serves as cofactor. In terms of processing, glycosylated. Can be O-fucosylated by POFUT2 on a serine or a threonine residue found within the consensus sequence C1-X(2)-(S/T)-C2-G of the TSP type-1 repeat domains where C1 and C2 are the first and second cysteine residue of the repeat, respectively. Fucosylated repeats can then be further glycosylated by the addition of a beta-1,3-glucose residue by the glucosyltransferase, B3GALTL. Fucosylation mediates the efficient secretion of ADAMTS family members. Can also be C-glycosylated with one or two mannose molecules on tryptophan residues within the consensus sequence W-X-X-W of the TPRs, and N-glycosylated. These other glycosylations can also facilitate secretion. In terms of tissue distribution, widely expressed in adult tissues.

It is found in the secreted. It localises to the extracellular space. The protein localises to the extracellular matrix. Metalloprotease that participate in microfibrils assembly. Microfibrils are extracellular matrix components occurring independently or along with elastin in the formation of elastic tissues. The sequence is that of A disintegrin and metalloproteinase with thrombospondin motifs 10 (Adamts10) from Mus musculus (Mouse).